The sequence spans 411 residues: Na(+)-translocating NADH-quinone reductase subunit F (411 aa).

Residues Val5–Ile25 traverse the membrane as a helical segment. The region spanning Gly36–Ile130 is the 2Fe-2S ferredoxin-type domain. [2Fe-2S] cluster contacts are provided by Cys73, Cys79, Cys82, and Cys114. The FAD-binding FR-type domain occupies Val133–Lys273.

The protein belongs to the NqrF family. In terms of assembly, composed of six subunits; NqrA, NqrB, NqrC, NqrD, NqrE and NqrF. Requires [2Fe-2S] cluster as cofactor. FAD serves as cofactor.

The protein localises to the cell inner membrane. It carries out the reaction a ubiquinone + n Na(+)(in) + NADH + H(+) = a ubiquinol + n Na(+)(out) + NAD(+). Its function is as follows. NQR complex catalyzes the reduction of ubiquinone-1 to ubiquinol by two successive reactions, coupled with the transport of Na(+) ions from the cytoplasm to the periplasm. The first step is catalyzed by NqrF, which accepts electrons from NADH and reduces ubiquinone-1 to ubisemiquinone by a one-electron transfer pathway. The chain is Na(+)-translocating NADH-quinone reductase subunit F from Haemophilus influenzae (strain PittGG).